Consider the following 283-residue polypeptide: DNA repair protein RecO (283 aa).

Polar residues predominate over residues 254–264 (SSPASVGSSAT). The interval 254 to 283 (SSPASVGSSATRYFAQGDTDENDRDPPGAR) is disordered.

It belongs to the RecO family.

Involved in DNA repair and RecF pathway recombination. The sequence is that of DNA repair protein RecO from Roseiflexus sp. (strain RS-1).